The following is a 180-amino-acid chain: uncharacterized protein (180 aa).

Positions 1 to 24 (MKKKTIFQCVILFFSILNIHVGMA) are cleaved as a signal peptide.

Functionally, part of the elfADCG-ycbUVF fimbrial operon, which promotes adhesion of bacteria to different abiotic surfaces. This is an uncharacterized protein from Escherichia coli (strain K12).